The sequence spans 93 residues: Small ribosomal subunit protein uS19 (93 aa).

This sequence belongs to the universal ribosomal protein uS19 family.

Its function is as follows. Protein S19 forms a complex with S13 that binds strongly to the 16S ribosomal RNA. The chain is Small ribosomal subunit protein uS19 from Pseudarthrobacter chlorophenolicus (strain ATCC 700700 / DSM 12829 / CIP 107037 / JCM 12360 / KCTC 9906 / NCIMB 13794 / A6) (Arthrobacter chlorophenolicus).